Here is a 224-residue protein sequence, read N- to C-terminus: Twisted gastrulation protein homolog 1 (224 aa).

The first 26 residues, 1-26, serve as a signal peptide directing secretion; it reads MRSPCAALSASLLLLLLLLWARSSVG. Asn53, Asn82, and Asn148 each carry an N-linked (GlcNAc...) asparagine glycan.

It belongs to the twisted gastrulation protein family. As to quaternary structure, interacts with CHRD and BMP4. This interaction enhances CHRD/BMP4 complex formation. Interacts with BMP7.

It is found in the secreted. Its function is as follows. May be involved in dorsoventral axis formation. Seems to antagonize BMP signaling by forming ternary complexes with CHRD and BMPs, thereby preventing BMPs from binding to their receptors. In addition to the anti-BMP function, also has pro-BMP activity, partly mediated by cleavage and degradation of CHRD, which releases BMPs from ternary complexes. May be an important modulator of BMP-regulated cartilage development and chondrocyte differentiation. May play a role in thymocyte development. The sequence is that of Twisted gastrulation protein homolog 1 (TWSG1) from Gallus gallus (Chicken).